The primary structure comprises 161 residues: MKPLHTPKPAQIWVDADACPAVIRDILFRAAARTGTALTLVANHSLSTPTLPHVRAIQVPGGPDAADDAIAERVAAGDLVVTQDIPLAARVLEAGATAVGPRGEPFTSNTIKERLSVRGFMEELRGAGIATGGPSALHARDRQAFAAQLDRWLAAQPRPPL.

It belongs to the UPF0178 family.

This chain is UPF0178 protein PXO_00400, found in Xanthomonas oryzae pv. oryzae (strain PXO99A).